Reading from the N-terminus, the 765-residue chain is Phosphoribosylformylglycinamidine synthase subunit PurL (765 aa).

His57 is a catalytic residue. Residues Tyr60 and Arg104 each contribute to the ATP site. A Mg(2+)-binding site is contributed by Glu106. Substrate contacts are provided by residues 107–110 (SHNH) and Arg129. Residue His108 is the Proton acceptor of the active site. Asp130 serves as a coordination point for Mg(2+). Gln254 is a substrate binding site. Asp282 provides a ligand contact to Mg(2+). 326–328 (ESQ) serves as a coordination point for substrate. ATP-binding residues include Asn508 and Gly545. Asn546 provides a ligand contact to Mg(2+). Residue Ser548 coordinates substrate.

The protein belongs to the FGAMS family. As to quaternary structure, monomer. Part of the FGAM synthase complex composed of 1 PurL, 1 PurQ and 2 PurS subunits.

Its subcellular location is the cytoplasm. The catalysed reaction is N(2)-formyl-N(1)-(5-phospho-beta-D-ribosyl)glycinamide + L-glutamine + ATP + H2O = 2-formamido-N(1)-(5-O-phospho-beta-D-ribosyl)acetamidine + L-glutamate + ADP + phosphate + H(+). It functions in the pathway purine metabolism; IMP biosynthesis via de novo pathway; 5-amino-1-(5-phospho-D-ribosyl)imidazole from N(2)-formyl-N(1)-(5-phospho-D-ribosyl)glycinamide: step 1/2. In terms of biological role, part of the phosphoribosylformylglycinamidine synthase complex involved in the purines biosynthetic pathway. Catalyzes the ATP-dependent conversion of formylglycinamide ribonucleotide (FGAR) and glutamine to yield formylglycinamidine ribonucleotide (FGAM) and glutamate. The FGAM synthase complex is composed of three subunits. PurQ produces an ammonia molecule by converting glutamine to glutamate. PurL transfers the ammonia molecule to FGAR to form FGAM in an ATP-dependent manner. PurS interacts with PurQ and PurL and is thought to assist in the transfer of the ammonia molecule from PurQ to PurL. In Corynebacterium aurimucosum (strain ATCC 700975 / DSM 44827 / CIP 107346 / CN-1) (Corynebacterium nigricans), this protein is Phosphoribosylformylglycinamidine synthase subunit PurL.